We begin with the raw amino-acid sequence, 4841 residues long: Nonribosomal peptide synthetase 2 (4841 aa).

The adenylation 1 stretch occupies residues 26–429 (VKPPNQNVAL…GRLSDGQVKL (404 aa)). Residues 531–604 (EPVDEFESSL…DIIFAARRQI (74 aa)) form the Carrier 1 domain. Ser565 carries the post-translational modification O-(pantetheine 4'-phosphoryl)serine. The condensation 1 stretch occupies residues 640 to 1042 (EEIIPCTPLQ…ILERPTQEIK (403 aa)). The segment at 1072 to 1463 (FEDVVRKHPE…GRIDDQVKLR (392 aa)) is adenylation 2. Positions 1587–1665 (EGDWSRMDLV…QLAKHLEGKP (79 aa)) constitute a Carrier 2 domain. At Ser1625 the chain carries O-(pantetheine 4'-phosphoryl)serine. The segment at 1702 to 2043 (ILPCTPLQEA…QTVWELEADS (342 aa)) is condensation 2. Residues 2139 to 2212 (SEVELDVRQV…KIAAKLLENR (74 aa)) enclose the Carrier 3 domain. At Ser2173 the chain carries O-(pantetheine 4'-phosphoryl)serine. The segment at 2248–2663 (AVLPCTPLQS…NHLATEDEAF (416 aa)) is condensation 3. Positions 2695-3090 (AAVHPNKLAL…GRADDQVKLR (396 aa)) are adenylation 3. The 75-residue stretch at 3219-3293 (QDILVLLYDA…DLANCLAKAA (75 aa)) folds into the Carrier 4 domain. An O-(pantetheine 4'-phosphoryl)serine modification is found at Ser3253. Residues 3333 to 3735 (IAPCSPLQEG…DLAAESPQSE (403 aa)) are condensation 4. One can recognise a Carrier 5 domain in the interval 3759–3838 (QNSFEWTSEA…KMITELASIT (80 aa)). At Ser3799 the chain carries O-(pantetheine 4'-phosphoryl)serine. The segment at 3873–4242 (SVLPPTHLQE…VEAEAVSDSL (370 aa)) is condensation 5. Positions 4318–4394 (IEWNQNEIGI…EMAQKADTKL (77 aa)) constitute a Carrier 6 domain. Ser4355 carries the O-(pantetheine 4'-phosphoryl)serine modification. The tract at residues 4430–4726 (EVLPALPMQV…DIHLITSESR (297 aa)) is condensation 6.

Belongs to the NRP synthetase family.

Its pathway is siderophore biosynthesis. Nonribosomal peptide synthetase; part of the gene cluster that mediates the biosynthesis of hydroxamate-containing siderophores that play a critical role in virulence. Gibberella zeae produces extracellular coprogen-type siderophores as well as the intracellular siderophore ferricrocin. The role of extracellular siderophores is to supply iron to the fungus during plant infection, and the intracellular ferricrocin is required for intracellular iron distribution and storage with a crucial role in ascus and ascospore development. SID1 catalyzes the conversion of L-ornithine to N(5)-hydroxyornithine, the first step in the biosynthesis of all hydroxamate-containing siderophores. The assembly of extracellular coprogen-type siderophores is performed by the nonribosomal peptide synthetase (NRPS) NPS6 whereas the intracellular siderophore ferricrocin is assembled by NPS2. This is Nonribosomal peptide synthetase 2 from Gibberella zeae (strain ATCC MYA-4620 / CBS 123657 / FGSC 9075 / NRRL 31084 / PH-1) (Wheat head blight fungus).